The following is a 251-amino-acid chain: Pyridoxine 5'-phosphate synthase (251 aa).

Residues asparagine 8 and arginine 19 each contribute to the 3-amino-2-oxopropyl phosphate site. The active-site Proton acceptor is the histidine 44. 1-deoxy-D-xylulose 5-phosphate-binding residues include arginine 46 and histidine 51. The Proton acceptor role is filled by glutamate 76. Threonine 106 is a 1-deoxy-D-xylulose 5-phosphate binding site. Residue histidine 200 is the Proton donor of the active site. 3-amino-2-oxopropyl phosphate contacts are provided by residues aspartate 201 and 223–224 (GH).

It belongs to the PNP synthase family. As to quaternary structure, homooctamer; tetramer of dimers.

Its subcellular location is the cytoplasm. The catalysed reaction is 3-amino-2-oxopropyl phosphate + 1-deoxy-D-xylulose 5-phosphate = pyridoxine 5'-phosphate + phosphate + 2 H2O + H(+). The protein operates within cofactor biosynthesis; pyridoxine 5'-phosphate biosynthesis; pyridoxine 5'-phosphate from D-erythrose 4-phosphate: step 5/5. Catalyzes the complicated ring closure reaction between the two acyclic compounds 1-deoxy-D-xylulose-5-phosphate (DXP) and 3-amino-2-oxopropyl phosphate (1-amino-acetone-3-phosphate or AAP) to form pyridoxine 5'-phosphate (PNP) and inorganic phosphate. The polypeptide is Pyridoxine 5'-phosphate synthase (Agrobacterium fabrum (strain C58 / ATCC 33970) (Agrobacterium tumefaciens (strain C58))).